Consider the following 387-residue polypeptide: Probable nitrate transporter NarT (387 aa).

Helical transmembrane passes span 14 to 34 (TLSL…MPFI), 45 to 65 (ISVI…PFGY), 69 to 89 (IVGA…PIFL), 97 to 117 (GMLM…SVGV), 137 to 157 (GVGN…AGAI), 161 to 181 (NTVR…FFLG), 211 to 231 (WYFI…NFLV), 246 to 266 (GIFI…GDKF), 268 to 288 (AVQA…ILSL), 294 to 314 (LFTI…GLIF), 330 to 350 (GIVS…ITFV), and 358 to 378 (HLAF…MIHL).

It belongs to the major facilitator superfamily. Nitrate/nitrite porter (TC 2.A.1.8) family.

Its subcellular location is the cell membrane. Functionally, probably required for nitrate uptake under anoxic conditions. Also possibly involved in excretion of nitrite produced by the dissimilatory reduction of nitrate. In Staphylococcus epidermidis (strain ATCC 35984 / DSM 28319 / BCRC 17069 / CCUG 31568 / BM 3577 / RP62A), this protein is Probable nitrate transporter NarT (narT).